A 310-amino-acid chain; its full sequence is MRIVFAGTPEFAAEHLKALLDSPYEIVAVYTQPDRPAGRGQKLMPSAVKALAVAHDIPVFQPPTLRNEDAQAELAALKPDLMVVVAYGLILPQVVLDIPRLGCINSHASLLPRWRGAAPIQRAVEAGDAESGVTVMRMEAGLDTGPMLLKVVTPISADDTGGSLHDRLAAMGPAAVVQAIAGLADGSLQGEVQDDALATYAHKLNKDEARIDWSRPAVELERLIRAFNPWPVCHSTLDGESVKVLAAKLSTGEGAPGEILSASKDGLVVACGDQALSLTRLQLPGGKALAFTDLFNSRREKFATGKVLGQ.

Ser109 to Pro112 lines the (6S)-5,6,7,8-tetrahydrofolate pocket.

It belongs to the Fmt family.

The enzyme catalyses L-methionyl-tRNA(fMet) + (6R)-10-formyltetrahydrofolate = N-formyl-L-methionyl-tRNA(fMet) + (6S)-5,6,7,8-tetrahydrofolate + H(+). Its function is as follows. Attaches a formyl group to the free amino group of methionyl-tRNA(fMet). The formyl group appears to play a dual role in the initiator identity of N-formylmethionyl-tRNA by promoting its recognition by IF2 and preventing the misappropriation of this tRNA by the elongation apparatus. This Pseudomonas putida (strain W619) protein is Methionyl-tRNA formyltransferase.